The sequence spans 129 residues: MAEKTITVEEVLKHNTRDDLYIVVKDKVYDISKFLDAHPGGEEVLVDLAGRDASGPFEDVGHSEDAQELLEKFYIGNLLRTEDGPQLPTTGAAAGGSGYDSSQPVKPAMWLFVLVMVVAYFAFRKYVLK.

Residues 3 to 79 (EKTITVEEVL…LEKFYIGNLL (77 aa)) form the Cytochrome b5 heme-binding domain. Heme is bound by residues histidine 38 and histidine 62. A helical membrane pass occupies residues 105–125 (VKPAMWLFVLVMVVAYFAFRK).

The protein belongs to the cytochrome b5 family.

The protein localises to the endoplasmic reticulum membrane. The protein resides in the microsome membrane. It is found in the mitochondrion. Its function is as follows. Membrane bound hemoprotein which function as an electron carrier for several membrane bound oxygenases. The sequence is that of Probable cytochrome b5 2 (oca8) from Schizosaccharomyces pombe (strain 972 / ATCC 24843) (Fission yeast).